We begin with the raw amino-acid sequence, 807 residues long: Glycerol-3-phosphate acyltransferase (807 aa).

Residues 308-313 (CHRSHM) carry the HXXXXD motif motif.

Belongs to the GPAT/DAPAT family.

It localises to the cell inner membrane. It catalyses the reaction sn-glycerol 3-phosphate + an acyl-CoA = a 1-acyl-sn-glycero-3-phosphate + CoA. It participates in phospholipid metabolism; CDP-diacylglycerol biosynthesis; CDP-diacylglycerol from sn-glycerol 3-phosphate: step 1/3. The sequence is that of Glycerol-3-phosphate acyltransferase from Shewanella loihica (strain ATCC BAA-1088 / PV-4).